The sequence spans 98 residues: NADH-ubiquinone oxidoreductase chain 4L (98 aa).

A run of 3 helical transmembrane segments spans residues Met1 to Ile21, Ser29 to Leu49, and Ile61 to Val81.

The protein belongs to the complex I subunit 4L family. Core subunit of respiratory chain NADH dehydrogenase (Complex I) which is composed of 45 different subunits.

It localises to the mitochondrion inner membrane. The catalysed reaction is a ubiquinone + NADH + 5 H(+)(in) = a ubiquinol + NAD(+) + 4 H(+)(out). In terms of biological role, core subunit of the mitochondrial membrane respiratory chain NADH dehydrogenase (Complex I) which catalyzes electron transfer from NADH through the respiratory chain, using ubiquinone as an electron acceptor. Part of the enzyme membrane arm which is embedded in the lipid bilayer and involved in proton translocation. The chain is NADH-ubiquinone oxidoreductase chain 4L (MT-ND4L) from Taxidea taxus (American badger).